A 109-amino-acid chain; its full sequence is uncharacterized protein (109 aa).

3 helical membrane passes run 16–36 (YIPL…YYGL), 54–74 (TVYF…LLCL), and 80–100 (FCSS…TLAM).

It is found in the membrane. This is an uncharacterized protein from Schizosaccharomyces pombe (strain 972 / ATCC 24843) (Fission yeast).